The chain runs to 530 residues: Na(+)/H(+) antiporter NhaB (530 aa).

Helical transmembrane passes span 23–43, 45–65, 90–110, 113–133, 140–160, 205–225, 238–258, 308–328, 351–371, 451–471, and 479–499; these read VAII…NPFL, GWLL…CYPL, LVAN…IYFM, LLLF…LLSI, AFLS…SVAV, LLMH…VGEP, FGEF…AGML, IAVW…LIGL, EEAL…AVII, ATPN…APLI, and VIMA…GIMF.

Belongs to the NhaB Na(+)/H(+) (TC 2.A.34) antiporter family.

It is found in the cell inner membrane. It carries out the reaction 2 Na(+)(in) + 3 H(+)(out) = 2 Na(+)(out) + 3 H(+)(in). Functionally, na(+)/H(+) antiporter that extrudes sodium in exchange for external protons. This is Na(+)/H(+) antiporter NhaB from Vibrio cholerae serotype O1 (strain ATCC 39541 / Classical Ogawa 395 / O395).